Consider the following 694-residue polypeptide: Methionine--tRNA ligase (694 aa).

The 'HIGH' region signature appears at Pro-12–His-22. Residues Cys-143, Cys-146, Cys-156, and Cys-159 each coordinate Zn(2+). The 'KMSKS' region signature appears at Lys-330–Ser-334. Position 333 (Lys-333) interacts with ATP. Positions Met-550–Ala-573 are enriched in low complexity. The tract at residues Met-550–Thr-582 is disordered. Residues Asp-591–Arg-694 enclose the tRNA-binding domain.

It belongs to the class-I aminoacyl-tRNA synthetase family. MetG type 1 subfamily. Homodimer. Requires Zn(2+) as cofactor.

The protein resides in the cytoplasm. The enzyme catalyses tRNA(Met) + L-methionine + ATP = L-methionyl-tRNA(Met) + AMP + diphosphate. Functionally, is required not only for elongation of protein synthesis but also for the initiation of all mRNA translation through initiator tRNA(fMet) aminoacylation. The sequence is that of Methionine--tRNA ligase from Xanthomonas euvesicatoria pv. vesicatoria (strain 85-10) (Xanthomonas campestris pv. vesicatoria).